We begin with the raw amino-acid sequence, 263 residues long: Probable ABC transporter permease protein ycf63 (263 aa).

5 helical membrane passes run 43-63 (IVGP…SMVF), 70-89 (EFLY…IAFT), 150-170 (ILSI…AFVM), 188-208 (ISDF…IGFI), and 230-250 (SVVT…YFMF).

The protein belongs to the MlaE permease family.

The protein resides in the plastid. The protein localises to the chloroplast membrane. Its function is as follows. Could be part of an ABC transporter complex. The sequence is that of Probable ABC transporter permease protein ycf63 (ycf63) from Pyropia yezoensis (Susabi-nori).